A 2153-amino-acid chain; its full sequence is Non-reducing polyketide synthase albA (2153 aa).

An N-terminal acylcarrier protein transacylase domain (SAT) region spans residues 8-244 (YLFGDQTSDI…VKAPIHGPYH (237 aa)). Residues 375-806 (NSKIAIIGMS…GGNTALLLED (432 aa)) enclose the Ketosynthase family 3 (KS3) domain. Residues C547, H682, and H724 each act as for beta-ketoacyl synthase activity in the active site. Residues 912–1232 (FVFTGQGAQY…LASLHLAGID (321 aa)) are malonyl-CoA:ACP transacylase (MAT) domain. The active-site For acyl/malonyl transferase activity is the S1001. The segment at 1286–1425 (HEYLTTAAQK…CTVRFFDCAA (140 aa)) is N-terminal hotdog fold. Positions 1286 to 1598 (HEYLTTAAQK…FQALSRKILD (313 aa)) constitute a PKS/mFAS DH domain. The interval 1290–1603 (TTAAQKVIET…RKILDTVLPP (314 aa)) is product template (PT) domain. Residue H1326 is the Proton acceptor; for dehydratase activity of the active site. The interval 1452–1598 (DAHRLGRGMV…FQALSRKILD (147 aa)) is C-terminal hotdog fold. Catalysis depends on D1511, which acts as the Proton donor; for dehydratase activity. The segment at 1608–1643 (KGPARPAASAQKAAPAAAASKSRASAPAPAKPAAKP) is disordered. Low complexity predominate over residues 1610–1643 (PARPAASAQKAAPAAAASKSRASAPAPAKPAAKP). Positions 1643–1720 (PSAPSLVKRA…DFKQFLAPMS (78 aa)) constitute a Carrier 1 domain. An O-(pantetheine 4'-phosphoryl)serine modification is found at S1680. The disordered stretch occupies residues 1720 to 1765 (SQGEASDGSTSDPESSSSFNGGSSTDESSAGSPVSSPPNEKVTQVE). Positions 1725–1748 (SDGSTSDPESSSSFNGGSSTDESS) are enriched in low complexity. Residues 1749 to 1765 (AGSPVSSPPNEKVTQVE) are compositionally biased toward polar residues. A Carrier 2 domain is found at 1764–1841 (VEQHATIKEI…DVEDALGLKP (78 aa)). O-(pantetheine 4'-phosphoryl)serine is present on S1801. Positions 1879-2151 (SPHPRSTSIL…ELGSFIGNAM (273 aa)) are claisen cyclase domain. S1969 functions as the For Claisen cyclase activity in the catalytic mechanism.

It catalyses the reaction 6 malonyl-CoA + acetyl-CoA + 6 H(+) = naphtopyrone YWA1 + 6 CO2 + 7 CoA + H2O. It functions in the pathway secondary metabolite biosynthesis. Non-reducing polyketide synthase; part of the gene cluster that mediates the biosynthesis of aurasperone B, a dimeric gamma-naphthopyrone. The first step in the biosynthesis of aurasperone B is the production of gamma-naphthopyrone precursor YWA1 by the non-reducing polyketide synthase albA, via condensation of one acetyl-CoA starter unit with 6 malonyl-CoA units. YWA1 is then methylated by aunE at position C-6 to yield foncesin which is further methylated at position C-8 by aunD to produce fonsecin B. A key enzyme in the biosynthetic pathway is the cytochrome P450 monooxygenase aunB which catalyzes the oxidative dimerization of fonsecin B to aurasperone B. AunB also catalyzes the oxidative dimerization of rubrofusarin B into aurasperone A. The chain is Non-reducing polyketide synthase albA from Aspergillus niger (strain ATCC MYA-4892 / CBS 513.88 / FGSC A1513).